Here is a 1070-residue protein sequence, read N- to C-terminus: Phosphatidylinositol 4,5-bisphosphate 3-kinase catalytic subunit beta isoform (1070 aa).

Residues 26 to 115 form the PI3K-ABD domain; sequence SDGSISVDFL…LPVLKLVTRS (90 aa). One can recognise a PI3K-RBD domain in the interval 194 to 285; sequence GGKLVVAVHF…RTLPHFILVE (92 aa). Serine 324 is subject to Phosphoserine. In terms of domain architecture, C2 PI3K-type spans 327 to 496; that stretch reads WGNNNPFQIV…NATALHIKFP (170 aa). The Nuclear localization signal (NLS) motif lies at 410–418; the sequence is KVKTKKSTK. One can recognise a PIK helical domain in the interval 524–701; it reads ANVSSRGGKK…GVILEAYCRG (178 aa). Positions 772-1053 constitute a PI3K/PI4K catalytic domain; the sequence is YVEKCRYMDS…KFDEALRESW (282 aa). The interval 778–784 is G-loop; sequence YMDSKMK. The catalytic loop stretch occupies residues 916–924; the sequence is GIGDRHSDN. The tract at residues 935-961 is activation loop; the sequence is HIDFGHILGNFKSKFGIKRERVPFILT. Serine 1070 carries the post-translational modification Phosphoserine; by autocatalysis.

This sequence belongs to the PI3/PI4-kinase family. In terms of assembly, heterodimer of a catalytic subunit PIK3CB and a p85 regulatory subunit (PIK3R1, PIK3R2 or PIK3R3). Interaction with PIK3R2 is required for nuclear localization and nuclear export. Part of a complex with PIK3R1 and PTEN. Binding to PTEN may antagonize the lipid kinase activity under normal growth conditions. Part of a complex involved in autophagosome formation composed of PIK3C3 and PIK3R4. Interacts with BECN1, ATG14 and RAB5A. In terms of processing, autophosphorylation at Ser-1070 negatively regulates the phosphatidylinositol-4,5-bisphosphate 3-kinase activity.

It is found in the cytoplasm. It localises to the nucleus. It carries out the reaction a 1,2-diacyl-sn-glycero-3-phospho-(1D-myo-inositol-4,5-bisphosphate) + ATP = a 1,2-diacyl-sn-glycero-3-phospho-(1D-myo-inositol-3,4,5-trisphosphate) + ADP + H(+). The enzyme catalyses 1-octadecanoyl-2-(5Z,8Z,11Z,14Z)-eicosatetraenoyl-sn-glycero-3-phospho-1D-myo-inositol 4,5-bisphosphate + ATP = 1-octadecanoyl-2-(5Z,8Z,11Z,14Z-eicosatetraenoyl)-sn-glycero-3-phospho-(1D-myo-inositol 3,4,5-triphosphate) + ADP + H(+). It catalyses the reaction L-seryl-[protein] + ATP = O-phospho-L-seryl-[protein] + ADP + H(+). It functions in the pathway phospholipid metabolism; phosphatidylinositol phosphate biosynthesis. Its function is as follows. Phosphoinositide-3-kinase (PI3K) phosphorylates phosphatidylinositol (PI) derivatives at position 3 of the inositol ring to produce 3-phosphoinositides. Uses ATP and PtdIns(4,5)P2 (phosphatidylinositol 4,5-bisphosphate) to generate phosphatidylinositol 3,4,5-trisphosphate (PIP3). PIP3 plays a key role by recruiting PH domain-containing proteins to the membrane, including AKT1 and PDPK1, activating signaling cascades involved in cell growth, survival, proliferation, motility and morphology. Involved in the activation of AKT1 upon stimulation by G-protein coupled receptors (GPCRs) ligands such as CXCL12, sphingosine 1-phosphate, and lysophosphatidic acid. May also act downstream receptor tyrosine kinases. Required in different signaling pathways for stable platelet adhesion and aggregation. Plays a role in platelet activation signaling triggered by GPCRs, alpha-IIb/beta-3 integrins (ITGA2B/ ITGB3) and ITAM (immunoreceptor tyrosine-based activation motif)-bearing receptors such as GP6. Regulates the strength of adhesion of ITGA2B/ ITGB3 activated receptors necessary for the cellular transmission of contractile forces. Required for platelet aggregation induced by F2 (thrombin) and thromboxane A2 (TXA2). Has a role in cell survival. May have a role in cell migration. Involved in the early stage of autophagosome formation. Modulates the intracellular level of PtdIns3P (phosphatidylinositol 3-phosphate) and activates PIK3C3 kinase activity. May act as a scaffold, independently of its lipid kinase activity to positively regulate autophagy. May have a role in insulin signaling as scaffolding protein in which the lipid kinase activity is not required. May have a kinase-independent function in regulating cell proliferation and in clathrin-mediated endocytosis. Mediator of oncogenic signal in cell lines lacking PTEN. The lipid kinase activity is necessary for its role in oncogenic transformation. Required for the growth of ERBB2 and RAS driven tumors. Also has a protein kinase activity showing autophosphorylation. In Rattus norvegicus (Rat), this protein is Phosphatidylinositol 4,5-bisphosphate 3-kinase catalytic subunit beta isoform (Pik3cb).